The primary structure comprises 321 residues: Nucleotide-binding protein LI0459 (321 aa).

An ATP-binding site is contributed by 41 to 48 (GMSGAGKS).

This sequence belongs to the RapZ-like family.

In terms of biological role, displays ATPase and GTPase activities. This is Nucleotide-binding protein LI0459 from Lawsonia intracellularis (strain PHE/MN1-00).